Reading from the N-terminus, the 207-residue chain is LexA repressor (207 aa).

The segment at residues 28-48 (RAEISRELGFKSANAAEEHLK) is a DNA-binding region (H-T-H motif). Catalysis depends on for autocatalytic cleavage activity residues Ser123 and Lys160.

Belongs to the peptidase S24 family. As to quaternary structure, homodimer.

It catalyses the reaction Hydrolysis of Ala-|-Gly bond in repressor LexA.. Represses a number of genes involved in the response to DNA damage (SOS response), including recA and lexA. In the presence of single-stranded DNA, RecA interacts with LexA causing an autocatalytic cleavage which disrupts the DNA-binding part of LexA, leading to derepression of the SOS regulon and eventually DNA repair. In Haemophilus influenzae (strain ATCC 51907 / DSM 11121 / KW20 / Rd), this protein is LexA repressor.